Reading from the N-terminus, the 103-residue chain is Protamine-2 (103 aa).

The segment at 1–103 (MVRYRMRSLS…RTRRRRCRRY (103 aa)) is disordered. 2 positions are modified to phosphoserine: S8 and S10. Positions 8 to 17 (SLSERPHEVH) are enriched in basic and acidic residues. The segment covering 23–35 (GQEQGHNGQEEQG) has biased composition (low complexity). Position 37 is a phosphoserine (S37). The span at 39-48 (EHVEVYERTH) shows a compositional bias: basic and acidic residues. A compositionally biased stretch (basic residues) spans 51–103 (YSHHRRRRCSRRRLYRIHRRRHRSCRRRRRRSCRHRRRHRRGCRTRRRRCRRY).

The protein belongs to the protamine P2 family. Interacts with TDRP. In terms of processing, proteolytic processing into mature chains is required for histone eviction during spermatogenesis. Transition proteins (TNP1 and TNP2) are required for processing. As to expression, testis.

It localises to the nucleus. The protein resides in the chromosome. Its function is as follows. Protamines substitute for histones in the chromatin of sperm during the haploid phase of spermatogenesis. They compact sperm DNA into a highly condensed, stable and inactive complex. The polypeptide is Protamine-2 (PRM2) (Semnopithecus entellus (Northern plains gray langur)).